The primary structure comprises 511 residues: Inositol-3-phosphate synthase (511 aa).

Residues Gly70, Asn71, Asn72, Asp143, Ser179, Ile180, Gln190, Arg193, Ser230, Ala231, Asn232, Thr233, Gly281, Ser282, Asp306, Thr309, Asn340, Asn341, Asp342, Lys355, Gly393, Asp394, Asp422, and Ser423 each coordinate NAD(+).

The protein belongs to the myo-inositol 1-phosphate synthase family. The cofactor is NAD(+).

The protein resides in the cytoplasm. The catalysed reaction is D-glucose 6-phosphate = 1D-myo-inositol 3-phosphate. The protein operates within polyol metabolism; myo-inositol biosynthesis; myo-inositol from D-glucose 6-phosphate: step 1/2. Key enzyme in myo-inositol biosynthesis pathway that catalyzes the conversion of glucose 6-phosphate to 1-myo-inositol 1-phosphate in a NAD-dependent manner. Rate-limiting enzyme in the synthesis of all inositol-containing compounds. The chain is Inositol-3-phosphate synthase (ino1) from Dictyostelium discoideum (Social amoeba).